We begin with the raw amino-acid sequence, 802 residues long: Leucine--tRNA ligase (802 aa).

The 'HIGH' region signature appears at 41-52; sequence PYPSGQGLHVGH. Positions 580-584 match the 'KMSKS' region motif; it reads KMSKS. Residue Lys583 coordinates ATP.

This sequence belongs to the class-I aminoacyl-tRNA synthetase family.

It localises to the cytoplasm. The enzyme catalyses tRNA(Leu) + L-leucine + ATP = L-leucyl-tRNA(Leu) + AMP + diphosphate. This is Leucine--tRNA ligase from Alkaliphilus oremlandii (strain OhILAs) (Clostridium oremlandii (strain OhILAs)).